We begin with the raw amino-acid sequence, 339 residues long: Phenylalanine--tRNA ligase alpha subunit (339 aa).

E253 is a Mg(2+) binding site.

Belongs to the class-II aminoacyl-tRNA synthetase family. Phe-tRNA synthetase alpha subunit type 1 subfamily. In terms of assembly, tetramer of two alpha and two beta subunits. Mg(2+) serves as cofactor.

Its subcellular location is the cytoplasm. The catalysed reaction is tRNA(Phe) + L-phenylalanine + ATP = L-phenylalanyl-tRNA(Phe) + AMP + diphosphate + H(+). The protein is Phenylalanine--tRNA ligase alpha subunit of Ruthia magnifica subsp. Calyptogena magnifica.